Consider the following 339-residue polypeptide: DNA-directed RNA polymerase subunit alpha (339 aa).

Residues 1 to 233 form an alpha N-terminal domain (alpha-NTD) region; sequence MVREEITGST…DLFLPFIHTE (233 aa). The interval 266–339 is alpha C-terminal domain (alpha-CTD); that stretch reads GIPLNCIFID…IDLPKNKFSL (74 aa).

The protein belongs to the RNA polymerase alpha chain family. In plastids the minimal PEP RNA polymerase catalytic core is composed of four subunits: alpha, beta, beta', and beta''. When a (nuclear-encoded) sigma factor is associated with the core the holoenzyme is formed, which can initiate transcription.

It is found in the plastid. The protein localises to the chloroplast. The catalysed reaction is RNA(n) + a ribonucleoside 5'-triphosphate = RNA(n+1) + diphosphate. Functionally, DNA-dependent RNA polymerase catalyzes the transcription of DNA into RNA using the four ribonucleoside triphosphates as substrates. This Sorghum bicolor (Sorghum) protein is DNA-directed RNA polymerase subunit alpha.